Here is a 156-residue protein sequence, read N- to C-terminus: Putative pre-16S rRNA nuclease (156 aa).

It belongs to the YqgF nuclease family.

It is found in the cytoplasm. Its function is as follows. Could be a nuclease involved in processing of the 5'-end of pre-16S rRNA. This is Putative pre-16S rRNA nuclease from Caulobacter vibrioides (strain ATCC 19089 / CIP 103742 / CB 15) (Caulobacter crescentus).